We begin with the raw amino-acid sequence, 355 residues long: Phosphoserine aminotransferase (355 aa).

R41 is a binding site for L-glutamate. Residues 75–76 (AS), W99, T147, D166, and Q189 each bind pyridoxal 5'-phosphate. Position 190 is an N6-(pyridoxal phosphate)lysine (K190). Residue 231-232 (NT) coordinates pyridoxal 5'-phosphate.

It belongs to the class-V pyridoxal-phosphate-dependent aminotransferase family. SerC subfamily. As to quaternary structure, homodimer. It depends on pyridoxal 5'-phosphate as a cofactor.

The protein resides in the cytoplasm. The enzyme catalyses O-phospho-L-serine + 2-oxoglutarate = 3-phosphooxypyruvate + L-glutamate. It catalyses the reaction 4-(phosphooxy)-L-threonine + 2-oxoglutarate = (R)-3-hydroxy-2-oxo-4-phosphooxybutanoate + L-glutamate. It functions in the pathway amino-acid biosynthesis; L-serine biosynthesis; L-serine from 3-phospho-D-glycerate: step 2/3. Its pathway is cofactor biosynthesis; pyridoxine 5'-phosphate biosynthesis; pyridoxine 5'-phosphate from D-erythrose 4-phosphate: step 3/5. Its function is as follows. Catalyzes the reversible conversion of 3-phosphohydroxypyruvate to phosphoserine and of 3-hydroxy-2-oxo-4-phosphonooxybutanoate to phosphohydroxythreonine. In Bacteroides thetaiotaomicron (strain ATCC 29148 / DSM 2079 / JCM 5827 / CCUG 10774 / NCTC 10582 / VPI-5482 / E50), this protein is Phosphoserine aminotransferase.